Consider the following 143-residue polypeptide: Large-conductance mechanosensitive channel (143 aa).

2 helical membrane passes run 10-30 and 89-109; these read FAVKGNVMDLAVGVIIGGAFS and GSFITVAINFVILAFIIFLMV.

Belongs to the MscL family. In terms of assembly, homopentamer.

Its subcellular location is the cell inner membrane. Its function is as follows. Channel that opens in response to stretch forces in the membrane lipid bilayer. May participate in the regulation of osmotic pressure changes within the cell. The sequence is that of Large-conductance mechanosensitive channel from Burkholderia cenocepacia (strain ATCC BAA-245 / DSM 16553 / LMG 16656 / NCTC 13227 / J2315 / CF5610) (Burkholderia cepacia (strain J2315)).